The following is a 972-amino-acid chain: Multiple C2 domain and transmembrane region protein 8 (972 aa).

Positions 1 to 107 (MMSNLKLGVE…PYSEAVGLPY (107 aa)) constitute a C2 1 domain. The tract at residues 142-203 (PNLISTKKIP…MMESSLYQAP (62 aa)) is disordered. A compositionally biased stretch (basic residues) spans 150 to 159 (IPSKSRHKFH). The span at 161 to 173 (IPTNESNHSPRGN) shows a compositional bias: polar residues. Positions 179–194 (PQPPPPQSQTALPPPM) are enriched in pro residues. C2 domains lie at 232–352 (GGGK…PEWY), 384–507 (ALNA…NRWF), and 543–669 (YSSD…SHSY). Residues Asp-265, Asp-271, Asp-318, Asp-320, and Asp-325 each contribute to the Ca(2+) site. Transmembrane regions (helical) follow at residues 803–823 (IIFL…SLCL) and 924–944 (TVVL…LYIM).

This sequence belongs to the MCTP family. Ca(2+) is required as a cofactor. As to expression, expressed in root hairs.

Its subcellular location is the membrane. It localises to the vesicle. May function as a signaling molecule by regulating the trafficking of other regulators. The chain is Multiple C2 domain and transmembrane region protein 8 from Arabidopsis thaliana (Mouse-ear cress).